The chain runs to 776 residues: FT-interacting protein 4 (776 aa).

Basic and acidic residues predominate over residues 1–16 (MQRPPPEDFSLKETKP). The segment at 1–23 (MQRPPPEDFSLKETKPHLGGGKV) is disordered. C2 domains follow at residues 22 to 142 (KVTG…PQWY), 181 to 305 (VSGT…SRWF), and 346 to 474 (YSSD…THSY). 5 residues coordinate Ca(2+): D55, D61, D108, D110, and D115. 3 helical membrane passes run 577 to 597 (IMGVLSGIIAVGKWFEQICVW), 608 to 628 (ILFIILVIYPELILPTIFLYL), and 719 to 739 (LFVLFCLIAAVILYITPFQVV).

It belongs to the MCTP family. Interacts with and regulates subcellular localization and trafficking of STM. Ca(2+) serves as cofactor. As to expression, highly expressed in both vegetative and inflorescence shoot apical meristems (SAMs). Accumulates in root meristems. Observed in flowers.

It is found in the endoplasmic reticulum membrane. Its subcellular location is the cytoplasm. The protein resides in the vesicle. The protein localises to the cell membrane. It localises to the endosome membrane. It is found in the golgi apparatus membrane. Required for proliferation and differentiation of shoot stem cells in the shoot apical meristem (SAM), thus determining the appropriate balance between the maintenance of shoot stem cells and their differentiation into other aboveground plant parts via the control of subcellular localization and intercellular trafficking of STM in the shoot apex. Prevents intracellular trafficking of STM to the plasma membrane in cells in the peripheral shoot meristem region thus facilitating STM recycling to the nucleus to maintain stem cells. May function as a signaling molecule by regulating the trafficking of other regulators. This is FT-interacting protein 4 from Arabidopsis thaliana (Mouse-ear cress).